We begin with the raw amino-acid sequence, 219 residues long: 2-hydroxy-3-keto-5-methylthiopentenyl-1-phosphate phosphatase (219 aa).

Belongs to the HAD-like hydrolase superfamily. MtnX family.

The catalysed reaction is 2-hydroxy-5-methylsulfanyl-3-oxopent-1-enyl phosphate + H2O = 1,2-dihydroxy-5-(methylsulfanyl)pent-1-en-3-one + phosphate. The protein operates within amino-acid biosynthesis; L-methionine biosynthesis via salvage pathway; L-methionine from S-methyl-5-thio-alpha-D-ribose 1-phosphate: step 4/6. Dephosphorylates 2-hydroxy-3-keto-5-methylthiopentenyl-1-phosphate (HK-MTPenyl-1-P) yielding 1,2-dihydroxy-3-keto-5-methylthiopentene (DHK-MTPene). This Bacillus cereus (strain ATCC 14579 / DSM 31 / CCUG 7414 / JCM 2152 / NBRC 15305 / NCIMB 9373 / NCTC 2599 / NRRL B-3711) protein is 2-hydroxy-3-keto-5-methylthiopentenyl-1-phosphate phosphatase.